The following is a 142-amino-acid chain: Putative mating-type transcription factor (142 aa).

The protein localises to the nucleus. This Eremothecium gossypii (strain ATCC 10895 / CBS 109.51 / FGSC 9923 / NRRL Y-1056) (Yeast) protein is Putative mating-type transcription factor.